Here is a 454-residue protein sequence, read N- to C-terminus: MLKQILSEMYIDPDLLAELSEEQKQILFFKMREEQIRRWKEREAAMERKESLPVKPRPKKENGKSVHWKLGADKEVWVWVMGEHHLDKPYDVLCNEIIAERARLKAEQEAEEPRKTHSEEFTNSLKTKSQYHDLQAPDNQQTKDIWKKVAEKEELEQGSRPAPTLEEEKIRSLSSSSRNIQQMLADSINRMKAYAFHQKKESMKKKQDEEINQIEEERTKQICKSWKEDSEWQASLRKSKAADEKRRSLAKQAREDYKRLSLGAQKGRGGERLQSPLRVPQKPERPPLPPKPQFLNSGAYPQKPLRNQGVVRTLSSSAQEDIIRWFKEEQLPLRAGYQKTSDTIAPWFHGILTLKKANELLLSTGMPGSFLIRVSERIKGYALSYLSEDGCKHFLIDASADAYSFLGVDQLQHATLADLVEYHKEEPITSLGKELLLYPCGQQDQLPDYLELFE.

Disordered stretches follow at residues 45-65, 107-131, 152-177, and 237-302; these read AMER…NGKS, EQEA…KSQY, KEEL…SSSS, and RKSK…AYPQ. Positions 107 to 120 are enriched in basic and acidic residues; the sequence is EQEAEEPRKTHSEE. A phosphoserine mark is found at Ser-118 and Ser-124. Over residues 240–259 the composition is skewed to basic and acidic residues; sequence KAADEKRRSLAKQAREDYKR. Phosphoserine occurs at positions 261 and 315. The region spanning 347 to 440 is the SH2 domain; sequence WFHGILTLKK…LGKELLLYPC (94 aa).

Interacts with ESR1. In terms of tissue distribution, ubiquitously expressed. Aberrantly expressed in some cancers.

It localises to the cytoplasm. Inhibits estrogen-induced cell proliferation by competing with PLCG for binding to ESR1, blocking the effect of estrogen on PLCG and repressing estrogen-induced proliferation. May play a role in T-cell development and function. The sequence is that of SH2 domain-containing protein 4A (SH2D4A) from Homo sapiens (Human).